The primary structure comprises 480 residues: Endo-1,6-beta-D-glucanase (480 aa).

Residues Met-1–Ala-17 form the signal peptide. Asn-50 carries an N-linked (GlcNAc...) asparagine glycan. Glu-225 acts as the Proton donor in catalysis. Glu-321 (nucleophile) is an active-site residue.

This sequence belongs to the glycosyl hydrolase 30 family.

The protein resides in the secreted. It carries out the reaction Random hydrolysis of (1-&gt;6)-linkages in (1-&gt;6)-beta-D-glucans.. Its function is as follows. Partially degrades N.crassa cell wall beta-D-glucan, liberating small amounts of oligosaccharides. The sequence is that of Endo-1,6-beta-D-glucanase (neg-1) from Neurospora crassa (strain ATCC 24698 / 74-OR23-1A / CBS 708.71 / DSM 1257 / FGSC 987).